The primary structure comprises 671 residues: MCSTCANVLKYYDWDPHFKLVINPNNFLSVGFCSNPLMCCYPELLPEFGTVWDCDRSPLEIYLESILGDDEWASTFDAVDPVVPPMHWGAAGKIFQPHPGVLMHHLIGKVAAGWDPDLPLIRLEADDGSITAPEQGTMVGGVIAEPSAQMSTAADMATGKSVDSEWEAFFSFHTSVNWSTSETQGKILFKQSLGPLLNPYLEHLAKLYVAWSGSIEVRFSISGSGVFGGKLAAIVVPPGVDPVQSTSMLQYPHVLFDARQVEPVIFCLPDLRSTLYHLMSDTDTTSLVIMVYNDLINPYANDANSSGCIVTVETKPGPDFKFHLLKPPGSMLTHGSIPSDLIPKTSSLWIGNRYWSDITDFVIRPFVFQANRHFDFNQETAGWSTPRFRPISVTITEQNGAKLGIGVATDYIVPGIPDGWPDTTIPGELIPAGDYAITNGTGNDITTATGYDTADIIKNNTNFRGMYICGSLQRAWGDKKISNTAFITTATLDGDNNNKINPCNTIDQSKIVVFQDNHVGKKAQTSDDTLALLGYTGIGEQAIGSDRDRVVRISTLPETGARGGNHPIFYKNSIKLGYVIRSIDVFNSQILHTSRQLSLNHYLLPPDSFAVYRIIDSNGSWFDIGIDSDGFSFVGVSGFGKLEFPLSASYMGIQLAKIRLASNIRSPMTKL.

This sequence belongs to the caliciviridae capsid protein family. In terms of assembly, homomultimer. Interacts with the minor capsid protein VP2. May bind to VP3 and Vpg proteins. Binds to alpha-2,6-linked sialic acid at surface of target cells. Interacts with host F11R/JAM-1/JAM-A; this interaction allows viral binding and entry into the host cell. As to quaternary structure, homooligomer; probably disulfide-linked. Post-translationally, cleaved by the viral protease to produce mature capsid protein. Cleaved by host caspase-2 and caspase-6 to generate protein p40, this might be linked to the cytopathic effect of the capsid leader protein.

It is found in the virion. The protein resides in the host cytoplasm. Self assembles to form an icosahedral capsid with a T=3 symmetry, about 38 nm in diameter, and consisting of 180 capsid proteins. A smaller form of capsid with a diameter of 23 nm might be capsid proteins assembled as icosahedron with T=1 symmetry. The capsid encapsulates the genomic RNA and is decorated with VP2 proteins. Attaches virion to target cells by binding to feline junctional adhesion molecule A (F11R) and/or to alpha-2,6-linked sialic acid. Once attached, the virion is endocytosed. Acidification of the endosome induces conformational change of capsid protein thereby injecting virus genomic RNA into host cytoplasm. Functionally, may function as a viroporin. This chain is Capsid protein VP1 (CPP76), found in Feline calicivirus (strain F9) (FCV).